Consider the following 272-residue polypeptide: Acidic leucine-rich nuclear phosphoprotein 32 family member B (272 aa).

LRR repeat units follow at residues 18 to 38, 43 to 64, 65 to 87, and 89 to 110; these read AVRE…EGLT, NLEF…PKLP, KLKK…AEEL, and SLTH…EPLK. The LRRCT domain maps to 123 to 161; it reads CEVTNRSDYRETVFRLLPQLSYLDGYDREDQEAPDSDVE. Positions 149–254 are enriched in acidic residues; that stretch reads DREDQEAPDS…DEDEDEEEEE (106 aa). Positions 149-272 are disordered; that stretch reads DREDQEAPDS…RETDDEGEDD (124 aa). Residues Ser164 and Ser171 each carry the phosphoserine modification. Residues 255–265 show a composition bias toward basic and acidic residues; it reads SGKGEKRKRET. The Nuclear localization signal motif lies at 260–263; that stretch reads KRKR. Thr265 carries the post-translational modification Phosphothreonine.

This sequence belongs to the ANP32 family. In terms of assembly, interacts with histones H3 and H4. Interacts with KLF5; this interaction induces promoter region-specific histone incorporation and inhibition of histone acetylation by ANP32B. In terms of processing, some glutamate residues are glycylated by TTLL8. This modification occurs exclusively on glutamate residues and results in a glycine chain on the gamma-carboxyl group. Post-translationally, directly cleaved by caspase-3/CASP3.

The protein localises to the nucleus. Functionally, multifunctional protein that is involved in the regulation of many processes including cell proliferation, apoptosis, cell cycle progression or transcription. Regulates the proliferation of neuronal stem cells, differentiation of leukemic cells and progression from G1 to S phase of the cell cycle. As negative regulator of caspase-3-dependent apoptosis, may act as an antagonist of ANP32A in regulating tissue homeostasis. Exhibits histone chaperone properties, able to recruit histones to certain promoters, thus regulating the transcription of specific genes. Also plays an essential role in the nucleocytoplasmic transport of specific mRNAs via the uncommon nuclear mRNA export receptor XPO1/CRM1. Participates in the regulation of adequate adaptive immune responses by acting on mRNA expression and cell proliferation. The polypeptide is Acidic leucine-rich nuclear phosphoprotein 32 family member B (Anp32b) (Mus musculus (Mouse)).